The chain runs to 368 residues: Probable dual-specificity RNA methyltransferase RlmN (368 aa).

The active-site Proton acceptor is Glu-109. The Radical SAM core domain maps to 115–355; that stretch reads YPDRVTMCIS…VTIRDTRGQE (241 aa). Cys-122 and Cys-360 are disulfide-bonded. Cys-129, Cys-133, and Cys-136 together coordinate [4Fe-4S] cluster. S-adenosyl-L-methionine is bound by residues 184 to 185, Ser-218, 241 to 243, and Asn-317; these read GE and SLH. Cys-360 functions as the S-methylcysteine intermediate in the catalytic mechanism.

Belongs to the radical SAM superfamily. RlmN family. Requires [4Fe-4S] cluster as cofactor.

It is found in the cytoplasm. It carries out the reaction adenosine(2503) in 23S rRNA + 2 reduced [2Fe-2S]-[ferredoxin] + 2 S-adenosyl-L-methionine = 2-methyladenosine(2503) in 23S rRNA + 5'-deoxyadenosine + L-methionine + 2 oxidized [2Fe-2S]-[ferredoxin] + S-adenosyl-L-homocysteine. The enzyme catalyses adenosine(37) in tRNA + 2 reduced [2Fe-2S]-[ferredoxin] + 2 S-adenosyl-L-methionine = 2-methyladenosine(37) in tRNA + 5'-deoxyadenosine + L-methionine + 2 oxidized [2Fe-2S]-[ferredoxin] + S-adenosyl-L-homocysteine. Functionally, specifically methylates position 2 of adenine 2503 in 23S rRNA and position 2 of adenine 37 in tRNAs. The protein is Probable dual-specificity RNA methyltransferase RlmN of Streptomyces coelicolor (strain ATCC BAA-471 / A3(2) / M145).